A 793-amino-acid chain; its full sequence is Protocadherin beta-7 (793 aa).

The N-terminal stretch at 1-26 (MEARVERAVQKRQVLFLCVFLGMSWA) is a signal peptide. Over 27-688 (GAEPLRYFVA…DQANSLTVYL (662 aa)) the chain is Extracellular. Cadherin domains lie at 35–133 (VAEE…APVF), 138–242 (ISLK…APDF), 247–347 (YKVQ…RPEL), 352–451 (LTSP…APAF), and 456–561 (YTLF…SPFV). Asparagine 169 is a glycosylation site (N-linked (GlcNAc...) asparagine). Asparagine 418 and asparagine 436 each carry an N-linked (GlcNAc...) asparagine glycan. The N-linked (GlcNAc...) asparagine glycan is linked to asparagine 567. Residues 568–671 (SSAPCTEPLP…LVDGFSQPYL (104 aa)) enclose the Cadherin 6 domain. A helical transmembrane segment spans residues 689 to 709 (VVALASVSSLFLLSVLLFVAV). At 710-793 (RLCRRSRAAP…NRPFQNNLGF (84 aa)) the chain is on the cytoplasmic side.

It is found in the cell membrane. Potential calcium-dependent cell-adhesion protein. May be involved in the establishment and maintenance of specific neuronal connections in the brain. This is Protocadherin beta-7 (PCDHB7) from Homo sapiens (Human).